A 672-amino-acid chain; its full sequence is Forkhead box protein O3 (672 aa).

Disordered regions lie at residues 1-85 (MAEA…GVSS) and 110-152 (GPAS…CSSR). At Ser-30 the chain carries Phosphoserine. Thr-32 carries the post-translational modification Phosphothreonine. The residue at position 46 (Lys-46) is an N6-methyllysine. A compositionally biased stretch (acidic residues) spans 57–68 (IPEEDDDEDDED). The tract at residues 80 to 108 (GGGVSSTLGSGLLLEDSAMLLAPGGQDLG) is required for mitochondrial import. Over residues 110–129 (GPASAAGALSGGTPTQLQPQ) the composition is skewed to low complexity. The residue at position 148 (Lys-148) is an N6-methyllysine. A DNA-binding region (fork-head) is located at residues 156–250 (WGNLSYADLI…KSGKAPRRRA (95 aa)). Thr-178 is modified (phosphothreonine). 2 positions are modified to phosphoserine: Ser-208 and Ser-214. Lys-229 bears the N6-methyllysine mark. Residues 230-301 (SSWWIINPDG…GSPTSRSSDE (72 aa)) form a disordered region. N6-acetyllysine is present on Lys-241. Positions 241-258 (KSGKAPRRRAVSMDNSNK) match the Nuclear localization signal motif. A Phosphoserine modification is found at Ser-252. Over residues 260–271 (TKSRGRAAKKKA) the composition is skewed to basic residues. Residues Lys-261 and Lys-270 each carry the N6-methyllysine modification. Phosphoserine occurs at positions 279 and 283. Polar residues predominate over residues 282–297 (DSPSQLSKWPGSPTSR). Lys-289 carries the post-translational modification N6-methyllysine. Residue Ser-293 is modified to Phosphoserine. The residue at position 298 (Ser-298) is a Phosphoserine; by CaMK2A. The mediates interaction with CHUK/IKKA and IKBKB/IKKB stretch occupies residues 299–672 (SDELDAWTDF…QASSQSWVPG (374 aa)). Position 310 is a phosphoserine (Ser-310). Ser-314 is modified (phosphoserine; by SGK1). A phosphoserine; by AMPK mark is found at Ser-398 and Ser-412. Disordered regions lie at residues 399-441 (QPSP…SLNS) and 535-583 (HQHQ…QTLS). 2 stretches are compositionally biased toward polar residues: residues 409–441 (RGSSFPYTAKSSGLGSPTGSFNSTVFGPSSLNS) and 548–577 (ALSNSVSNMGLSDSSSLGSAKHQQQSPASQ). Lys-418 bears the N6-methyllysine mark. Position 420 is a phosphoserine (Ser-420). Phosphoserine; by MAPKAPK5 is present on Ser-550. A Phosphoserine; by AMPK and MAPKAPK5 modification is found at Ser-554. Residues Ser-587 and Ser-625 each carry the phosphoserine; by AMPK modification. Ser-643 bears the Phosphoserine; by IKKB mark.

As to quaternary structure, upon metabolic stress, forms a complex composed of FOXO3, SIRT3 and mitochondrial RNA polymerase POLRMT; the complex is recruited to mtDNA in a SIRT3-dependent manner. Also forms a complex composed of FOXO3, SIRT3, TFAM and POLRMT. Interacts with SIRT2; the interaction occurs independently of SIRT2 deacetylase activity. Interacts with YWHAB/14-3-3-beta and YWHAZ/14-3-3-zeta, which are required for cytosolic sequestration. Upon oxidative stress, interacts with STK4/MST1, which disrupts interaction with YWHAB/14-3-3-beta and leads to nuclear translocation. Interacts with PIM1. Interacts with DDIT3/CHOP. Interacts (deacetylated form) with SKP2. Interacts with CHUK and IKBKB. Interacts with CAMK2A, CAMK2B and calcineurin A. Interacts with NUPR1; this interaction represses FOXO3 transactivation. Deacetylation by SIRT1 or SIRT2 stimulates interaction of FOXO3 with SKP2 and facilitates SCF(SKP2)-mediated FOXO3 ubiquitination and proteasomal degradation. Deacetylation by SIRT2 stimulates FOXO3-mediated transcriptional activity in response to oxidative stress. Deacetylated by SIRT3. Deacetylation by SIRT3 stimulates FOXO3-mediated mtDNA transcriptional activity in response to metabolic stress. In terms of processing, in the presence of survival factors such as IGF1, phosphorylated on Thr-32 and Ser-252 by AKT1/PKB. This phosphorylated form then interacts with 14-3-3 proteins and is retained in the cytoplasm. Survival factor withdrawal induces dephosphorylation and promotes translocation to the nucleus where the dephosphorylated protein induces transcription of target genes and triggers apoptosis. Although AKT1/PKB doesn't appear to phosphorylate Ser-314 directly, it may activate other kinases that trigger phosphorylation at this residue. Phosphorylated by STK4/MST1 on Ser-208 upon oxidative stress, which leads to dissociation from YWHAB/14-3-3-beta and nuclear translocation. Phosphorylated by PIM1. Phosphorylation by AMPK leads to the activation of transcriptional activity without affecting subcellular localization. Phosphorylated by AMPK on Ser-30 in response to metabolic stress which mediates FOXO3 mitochondrial translocation. Phosphorylation by MAPKAPK5 promotes nuclear localization and DNA-binding, leading to induction of miR-34b and miR-34c expression, 2 post-transcriptional regulators of MYC that bind to the 3'UTR of MYC transcript and prevent its translation. Phosphorylated by CHUK/IKKA and IKBKB/IKKB. TNF-induced inactivation of FOXO3 requires its phosphorylation at Ser-643 by IKBKB/IKKB which promotes FOXO3 retention in the cytoplasm, polyubiquitination and ubiquitin-mediated proteasomal degradation. May be dephosphorylated by calcineurin A on Ser-298 which abolishes FOXO3 transcriptional activity. Phosphorylation at Ser-252 promotes its degradation by the proteasome. Dephosphorylation at Ser-252 by protein phosphatase 2A (PPP2CA) promotes its stabilization; interaction with PPP2CA is enhanced by AMBRA1. Post-translationally, heavily methylated by SET9 which decreases stability, while moderately increasing transcriptional activity. The main methylation site is Lys-270. Methylation doesn't affect subcellular location. Polyubiquitinated. Ubiquitinated by a SCF complex containing SKP2, leading to proteasomal degradation. In terms of processing, the N-terminus is cleaved following import into the mitochondrion. Expressed in white and brown adipose tissues (at protein level). Expressed in liver, kidney, lung and colon (at protein level). Expressed in skeletal muscles (at protein level).

It is found in the cytoplasm. Its subcellular location is the cytosol. The protein localises to the nucleus. The protein resides in the mitochondrion matrix. It localises to the mitochondrion outer membrane. In terms of biological role, transcriptional activator that recognizes and binds to the DNA sequence 5'-[AG]TAAA[TC]A-3' and regulates different processes, such as apoptosis and autophagy. Acts as a positive regulator of autophagy in skeletal muscle: in starved cells, enters the nucleus following dephosphorylation and binds the promoters of autophagy genes, such as GABARAP1L, MAP1LC3B and ATG12, thereby activating their expression, resulting in proteolysis of skeletal muscle proteins. Triggers apoptosis in the absence of survival factors, including neuronal cell death upon oxidative stress. Participates in post-transcriptional regulation of MYC: following phosphorylation by MAPKAPK5, promotes induction of miR-34b and miR-34c expression, 2 post-transcriptional regulators of MYC that bind to the 3'UTR of MYC transcript and prevent its translation. In response to metabolic stress, translocates into the mitochondria where it promotes mtDNA transcription. Also acts as a key regulator of chondrogenic commitment of skeletal progenitor cells in response to lipid availability: when lipids levels are low, translocates to the nucleus and promotes expression of SOX9, which induces chondrogenic commitment and suppresses fatty acid oxidation. Also acts as a key regulator of regulatory T-cells (Treg) differentiation by activating expression of FOXP3. The sequence is that of Forkhead box protein O3 from Mus musculus (Mouse).